A 380-amino-acid polypeptide reads, in one-letter code: Cytochrome b (380 aa).

4 helical membrane passes run phenylalanine 34–methionine 54, tryptophan 78–isoleucine 99, tryptophan 114–leucine 134, and phenylalanine 179–threonine 199. Residues histidine 84 and histidine 98 each coordinate heme b. 2 residues coordinate heme b: histidine 183 and histidine 197. Residue histidine 202 coordinates a ubiquinone. The next 4 membrane-spanning stretches (helical) occupy residues leucine 227–threonine 247, leucine 289–histidine 309, leucine 321–serine 341, and phenylalanine 348–proline 368.

It belongs to the cytochrome b family. As to quaternary structure, the cytochrome bc1 complex contains 11 subunits: 3 respiratory subunits (MT-CYB, CYC1 and UQCRFS1), 2 core proteins (UQCRC1 and UQCRC2) and 6 low-molecular weight proteins (UQCRH/QCR6, UQCRB/QCR7, UQCRQ/QCR8, UQCR10/QCR9, UQCR11/QCR10 and a cleavage product of UQCRFS1). This cytochrome bc1 complex then forms a dimer. Heme b serves as cofactor.

It is found in the mitochondrion inner membrane. Component of the ubiquinol-cytochrome c reductase complex (complex III or cytochrome b-c1 complex) that is part of the mitochondrial respiratory chain. The b-c1 complex mediates electron transfer from ubiquinol to cytochrome c. Contributes to the generation of a proton gradient across the mitochondrial membrane that is then used for ATP synthesis. In Falco peregrinus (Peregrine falcon), this protein is Cytochrome b (MT-CYB).